Here is a 386-residue protein sequence, read N- to C-terminus: Inactive GDSL esterase/lipase-like protein 23 (386 aa).

The signal sequence occupies residues 1–29 (MMAKNCNLVSVLCVFLVLTLFNKPITVAG). Ser43 acts as the Nucleophile in catalysis. Residues Asn105, Asn165, and Asn288 are each glycosylated (N-linked (GlcNAc...) asparagine). Catalysis depends on residues Asp322 and His325.

This sequence belongs to the 'GDSL' lipolytic enzyme family. Part of the PYK10 complex. Interacts with MVP1. Expressed mainly in roots.

It is found in the endoplasmic reticulum. Functionally, involved in the control of the PYK10 complex size and possibly substrate specificity. May be exported from the endoplasmic reticulum upon interaction with MVP1. The polypeptide is Inactive GDSL esterase/lipase-like protein 23 (GLL23) (Arabidopsis thaliana (Mouse-ear cress)).